The chain runs to 190 residues: TATA-box-binding protein (190 aa).

Repeat copies occupy residues 11–87 (IENI…IEML) and 102–178 (IQNM…LREL).

The protein belongs to the TBP family.

General factor that plays a role in the activation of archaeal genes transcribed by RNA polymerase. Binds specifically to the TATA box promoter element which lies close to the position of transcription initiation. In Thermococcus kodakarensis (strain ATCC BAA-918 / JCM 12380 / KOD1) (Pyrococcus kodakaraensis (strain KOD1)), this protein is TATA-box-binding protein (tbp).